We begin with the raw amino-acid sequence, 483 residues long: PAT complex subunit CCDC47 (483 aa).

A signal peptide spans 1-20 (MKAFYAFCVVLLVFGSVSEA). Topologically, residues 21-135 (KFDDFEDEED…PAHLQNSWES (115 aa)) are cytoplasmic. The interval 46–119 (MEDSVTESPQ…DTSSNKNKDP (74 aa)) is disordered. Residues 60 to 104 (TEDDEDEATVELEGQDESQEGDFEDADTQEGDTESEPYDDEEFEG) are compositionally biased toward acidic residues. Residues 105 to 118 (YEDKPDTSSNKNKD) are compositionally biased toward basic and acidic residues. Residues 136–156 (YYLEILMVTGLLAYIMNYIIG) form a helical membrane-spanning segment. The Lumenal portion of the chain corresponds to 157 to 483 (KNKNSRLAQA…KMKQIKVKAM (327 aa)). N178 is a glycosylation site (N-linked (GlcNAc...) asparagine). The disordered stretch occupies residues 424-483 (QRQEAAQSRREEKKRAEKERIMNEEDPEKQRRLEEAALRREQKKLEKKQMKMKQIKVKAM). The segment covering 430 to 472 (QSRREEKKRAEKERIMNEEDPEKQRRLEEAALRREQKKLEKKQ) has biased composition (basic and acidic residues). The stretch at 450-483 (PEKQRRLEEAALRREQKKLEKKQMKMKQIKVKAM) forms a coiled coil. Residues 473–483 (MKMKQIKVKAM) are compositionally biased toward basic residues.

This sequence belongs to the CCDC47 family. In terms of assembly, component of the PAT complex, composed of WDR83OS/Asterix and CCDC47. The PAT complex is part of the multi-pass translocon (MPT) complex, composed of three subcomplexes, the GEL complex (composed of RAB5IF/OPTI and TMCO1), the BOS complex (composed of NCLN/Nicalin, NOMO1 and TMEM147) and the PAT complex (composed of WDR83OS/Asterix and CCDC47). The MPT complex associates with the SEC61 complex. Interacts with VCP, HSPA5, DERL1, DERL2 and SELENOS. In the embryo, expressed in the endodermal layer of the yolk sac and in the small intestine.

The protein localises to the endoplasmic reticulum membrane. Its subcellular location is the rough endoplasmic reticulum membrane. Component of the multi-pass translocon (MPT) complex that mediates insertion of multi-pass membrane proteins into the lipid bilayer of membranes. The MPT complex takes over after the SEC61 complex: following membrane insertion of the first few transmembrane segments of proteins by the SEC61 complex, the MPT complex occludes the lateral gate of the SEC61 complex to promote insertion of subsequent transmembrane regions. Within the MPT complex, the PAT subcomplex sequesters any highly polar regions in the transmembrane domains away from the non-polar membrane environment until they can be buried in the interior of the fully assembled protein. Within the PAT subcomplex, CCDC47 occludes the lateral gate of the SEC61 complex. Involved in the regulation of calcium ion homeostasis in the ER. Required for proper protein degradation via the ERAD (ER-associated degradation) pathway. Has an essential role in the maintenance of ER organization during embryogenesis. The chain is PAT complex subunit CCDC47 from Mus musculus (Mouse).